The sequence spans 238 residues: D-aminoacyl-tRNA deacylase (238 aa).

Belongs to the DtdA deacylase family. As to quaternary structure, monomer. The cofactor is Zn(2+).

The enzyme catalyses a D-aminoacyl-tRNA + H2O = a tRNA + a D-alpha-amino acid + H(+). The catalysed reaction is glycyl-tRNA(Ala) + H2O = tRNA(Ala) + glycine + H(+). It catalyses the reaction D-tyrosyl-tRNA(Tyr) + H2O = D-tyrosine + tRNA(Tyr). Functionally, D-aminoacyl-tRNA deacylase with broad substrate specificity. By recycling D-aminoacyl-tRNA to D-amino acids and free tRNA molecules, this enzyme counteracts the toxicity associated with the formation of D-aminoacyl-tRNA entities in vivo. Catalyzes the hydrolysis of D-tyrosyl-tRNA(Tyr). The sequence is that of D-aminoacyl-tRNA deacylase from Saccharolobus solfataricus (strain ATCC 35092 / DSM 1617 / JCM 11322 / P2) (Sulfolobus solfataricus).